Reading from the N-terminus, the 325-residue chain is uncharacterized protein (325 aa).

The protein belongs to the mgp1/MG371 family.

This is an uncharacterized protein from Mycoplasma pneumoniae (strain ATCC 29342 / M129 / Subtype 1) (Mycoplasmoides pneumoniae).